The sequence spans 1072 residues: DNA-directed RNA polymerase subunit beta (1072 aa).

This sequence belongs to the RNA polymerase beta chain family. In plastids the minimal PEP RNA polymerase catalytic core is composed of four subunits: alpha, beta, beta', and beta''. When a (nuclear-encoded) sigma factor is associated with the core the holoenzyme is formed, which can initiate transcription.

The protein resides in the plastid. The protein localises to the chloroplast. The enzyme catalyses RNA(n) + a ribonucleoside 5'-triphosphate = RNA(n+1) + diphosphate. DNA-dependent RNA polymerase catalyzes the transcription of DNA into RNA using the four ribonucleoside triphosphates as substrates. In Eucalyptus globulus subsp. globulus (Tasmanian blue gum), this protein is DNA-directed RNA polymerase subunit beta.